The chain runs to 195 residues: NADH-quinone oxidoreductase subunit B (195 aa).

[4Fe-4S] cluster is bound by residues cysteine 74, cysteine 75, cysteine 139, and cysteine 169.

This sequence belongs to the complex I 20 kDa subunit family. NDH-1 is composed of 14 different subunits. Subunits NuoB, C, D, E, F, and G constitute the peripheral sector of the complex. [4Fe-4S] cluster serves as cofactor.

It localises to the cell inner membrane. The enzyme catalyses a quinone + NADH + 5 H(+)(in) = a quinol + NAD(+) + 4 H(+)(out). NDH-1 shuttles electrons from NADH, via FMN and iron-sulfur (Fe-S) centers, to quinones in the respiratory chain. The immediate electron acceptor for the enzyme in this species is believed to be ubiquinone. Couples the redox reaction to proton translocation (for every two electrons transferred, four hydrogen ions are translocated across the cytoplasmic membrane), and thus conserves the redox energy in a proton gradient. This chain is NADH-quinone oxidoreductase subunit B, found in Methylorubrum populi (strain ATCC BAA-705 / NCIMB 13946 / BJ001) (Methylobacterium populi).